The sequence spans 164 residues: Outer membrane protein assembly factor BamE (164 aa).

An N-terminal signal peptide occupies residues 1–19 (MHAFFPRLLLLLLFLPLTH). Residues 111–164 (PAFSESEPAQNFFSPEQTFTPAPDTDSNMNEEPDKKGTVNFLKENQTNFYKDNQ) form a disordered region. 2 stretches are compositionally biased toward polar residues: residues 117-140 (EPAQ…SNMN) and 153-164 (KENQTNFYKDNQ).

The protein belongs to the BamE family. Part of the Bam complex.

The protein localises to the cell outer membrane. Its function is as follows. Part of the outer membrane protein assembly complex, which is involved in assembly and insertion of beta-barrel proteins into the outer membrane. The polypeptide is Outer membrane protein assembly factor BamE (Nitrosomonas europaea (strain ATCC 19718 / CIP 103999 / KCTC 2705 / NBRC 14298)).